The following is a 218-amino-acid chain: Pyridoxine/pyridoxamine 5'-phosphate oxidase (218 aa).

Substrate is bound by residues Arg-11–Tyr-14 and Lys-75. Residues Arg-70 to Lys-75, Tyr-85 to Thr-86, Lys-92, and Gln-114 each bind FMN. 3 residues coordinate substrate: Tyr-132, Arg-136, and Ser-140. Residues Gln-149–Ser-150 and Trp-195 contribute to the FMN site. Residue Arg-201 to His-203 coordinates substrate. An FMN-binding site is contributed by Arg-205.

It belongs to the pyridoxamine 5'-phosphate oxidase family. Homodimer. Requires FMN as cofactor.

The catalysed reaction is pyridoxamine 5'-phosphate + O2 + H2O = pyridoxal 5'-phosphate + H2O2 + NH4(+). The enzyme catalyses pyridoxine 5'-phosphate + O2 = pyridoxal 5'-phosphate + H2O2. It participates in cofactor metabolism; pyridoxal 5'-phosphate salvage; pyridoxal 5'-phosphate from pyridoxamine 5'-phosphate: step 1/1. The protein operates within cofactor metabolism; pyridoxal 5'-phosphate salvage; pyridoxal 5'-phosphate from pyridoxine 5'-phosphate: step 1/1. Its function is as follows. Catalyzes the oxidation of either pyridoxine 5'-phosphate (PNP) or pyridoxamine 5'-phosphate (PMP) into pyridoxal 5'-phosphate (PLP). The sequence is that of Pyridoxine/pyridoxamine 5'-phosphate oxidase from Mycolicibacterium gilvum (strain PYR-GCK) (Mycobacterium gilvum (strain PYR-GCK)).